Consider the following 782-residue polypeptide: LINE-1 type transposase domain-containing protein 1 (782 aa).

3 disordered regions span residues 1 to 30 (MSGVQSKAARLQKERKEKLSADRERKTATS), 90 to 200 (QEGD…GGAG), and 338 to 397 (NKGT…SAEE). 2 stretches are compositionally biased toward basic and acidic residues: residues 11-27 (LQKERKEKLSADRERKT) and 95-107 (ISERPKPGEKVEE). Phosphoserine is present on Ser136. Basic and acidic residues-rich tracts occupy residues 143–158 (SLERGGEALRGEHGRC) and 183–194 (EENRLKAPKESP). The span at 347 to 396 (GEEEEISETQGEETSEGETSELGEEEGSESEEEEESSESEEEEESSESAE) shows a compositional bias: acidic residues. Phosphoserine occurs at positions 407, 409, 442, 478, 490, 559, and 567.

The protein belongs to the transposase 22 family.

This is LINE-1 type transposase domain-containing protein 1 (L1td1) from Mus musculus (Mouse).